The following is a 286-amino-acid chain: CDP-diacylglycerol--serine O-phosphatidyltransferase (286 aa).

The next 6 helical transmembrane spans lie at 15–35 (ILPSAMTVLSICAGLTAIKFA), 74–94 (IDSLADAVNFGVTPALVLYVS), 95–115 (MLSKWPVGWVVVLLYAVCVVL), 135–155 (EFFVGMPAPAGAVSMIGLLAL), 167–187 (GWFLSFWVTGTSILLVSGIPM), and 207–227 (LAICAAAAVLAPYLLIWVIII).

This sequence belongs to the CDP-alcohol phosphatidyltransferase class-I family.

The protein localises to the cell membrane. The catalysed reaction is a CDP-1,2-diacyl-sn-glycerol + L-serine = a 1,2-diacyl-sn-glycero-3-phospho-L-serine + CMP + H(+). This is CDP-diacylglycerol--serine O-phosphatidyltransferase (pssA) from Mycobacterium tuberculosis (strain ATCC 25618 / H37Rv).